A 302-amino-acid polypeptide reads, in one-letter code: MQLRKPATAILALALSAGLAQADDAAPAAGSTLDKIAKNGVIVVGHRESSVPFSYYDNQQKVVGYSQDYSNAIVEAVKKKLNKPDLQVKLIPITSQNRIPLLQNGTFDFECGSTTNNVERQKQAAFSDTIFVVGTRLLTKKGGDIKDFANLKDKAVVVTSGTTSEVLLNKLNEEQKMNMRIISAKDHGDSFRTLESGRAVAFMMDDALLAGERAKAKKPDNWEIVGKPQSQEAYGCMLRKDDPQFKKLMDDTIAQVQTSGEAEKWFDKWFKNPIPPKNLNMNFELSDEMKALFKEPNDKALN.

A signal peptide spans 1-22 (MQLRKPATAILALALSAGLAQA).

It belongs to the bacterial solute-binding protein 3 family. The complex is composed of two ATP-binding proteins (GltL), two transmembrane proteins (GltJ and GltK) and a solute-binding protein (GltI).

It localises to the periplasm. Its function is as follows. Part of the ABC transporter complex GltIJKL involved in glutamate and aspartate uptake. Binds to both glutamate and aspartate. The protein is Glutamate/aspartate import solute-binding protein (gltI) of Escherichia coli (strain K12).